Consider the following 39-residue polypeptide: Putative beta-neurotoxin (39 aa).

The segment at 1-39 is disordered; the sequence is GGKEGYPLNSSNGCKSGRFAGTNSNENTECKGXDAENGY. The LCN-type CS-alpha/beta domain maps to 3–39; sequence KEGYPLNSSNGCKSGRFAGTNSNENTECKGXDAENGY. The segment covering 28 to 39 has biased composition (basic and acidic residues); that stretch reads TECKGXDAENGY.

It belongs to the long (4 C-C) scorpion toxin superfamily. Sodium channel inhibitor family. Beta subfamily. Expressed by the venom gland.

It localises to the secreted. Its function is as follows. Beta toxins bind voltage-independently at site-4 of sodium channels (Nav) and shift the voltage of activation toward more negative potentials thereby affecting sodium channel activation and promoting spontaneous and repetitive firing. The sequence is that of Putative beta-neurotoxin from Tityus pachyurus (Colombian scorpion).